The chain runs to 230 residues: MPQMAPVMTIDGPSGAGKGTLCQLLAEKLGWHLLDSGAIYRVLALAALHHDVELDSEAALVPLAANLDVQFQVDSEQVKVVLEGEDVSRTIRTEEVGNAASKIAAFPRVREALLRRQRAFRQTPGLIADGRDMGTVVFPDAEVKIFLDASAEERAQRRYKQLQDKGFDVNFERLLTEIRERDDRDRNRAVAPLKAAEDALVVDSTSMTIDEVLATVLAYAEQQLGDASAS.

Residue 12–20 (GPSGAGKGT) coordinates ATP.

This sequence belongs to the cytidylate kinase family. Type 1 subfamily.

The protein localises to the cytoplasm. The catalysed reaction is CMP + ATP = CDP + ADP. The enzyme catalyses dCMP + ATP = dCDP + ADP. This chain is Cytidylate kinase, found in Aeromonas salmonicida (strain A449).